We begin with the raw amino-acid sequence, 136 residues long: Protein NrdI (136 aa).

It belongs to the NrdI family.

In terms of biological role, probably involved in ribonucleotide reductase function. In Shigella dysenteriae serotype 1 (strain Sd197), this protein is Protein NrdI.